Reading from the N-terminus, the 126-residue chain is Small ribosomal subunit protein uS8 (126 aa).

This sequence belongs to the universal ribosomal protein uS8 family. As to quaternary structure, part of the 30S ribosomal subunit. Contacts proteins S5 and S12.

In terms of biological role, one of the primary rRNA binding proteins, it binds directly to 16S rRNA central domain where it helps coordinate assembly of the platform of the 30S subunit. This Desulfovibrio desulfuricans (strain ATCC 27774 / DSM 6949 / MB) protein is Small ribosomal subunit protein uS8.